The following is a 126-amino-acid chain: Nascent polypeptide-associated complex protein (126 aa).

The NAC-A/B domain maps to 10-77 (PRMMKQMQKM…AKKVAKAEEK (68 aa)).

It belongs to the NAC-alpha family. Homodimer. Interacts with the ribosome. Binds ribosomal RNA.

Functionally, contacts the emerging nascent chain on the ribosome. This Methanococcus maripaludis (strain C6 / ATCC BAA-1332) protein is Nascent polypeptide-associated complex protein.